The primary structure comprises 63 residues: MARQCEICGKKPMVGANVSHAHNVTKRRFNPNLQRVRAVRDGKPQTLYVCTNCIKSGFVVKAA.

Belongs to the bacterial ribosomal protein bL28 family.

The chain is Large ribosomal subunit protein bL28 from Desulfosudis oleivorans (strain DSM 6200 / JCM 39069 / Hxd3) (Desulfococcus oleovorans).